The chain runs to 397 residues: Phosphoglycerate kinase (397 aa).

Substrate-binding positions include Asp21–Asn23, Arg36, His59–Arg62, Arg118, and Arg151. ATP-binding positions include Lys202, Gly293, Glu324, and Gly353–Ser356.

This sequence belongs to the phosphoglycerate kinase family. Monomer.

Its subcellular location is the cytoplasm. The catalysed reaction is (2R)-3-phosphoglycerate + ATP = (2R)-3-phospho-glyceroyl phosphate + ADP. It participates in carbohydrate degradation; glycolysis; pyruvate from D-glyceraldehyde 3-phosphate: step 2/5. The sequence is that of Phosphoglycerate kinase from Chloroherpeton thalassium (strain ATCC 35110 / GB-78).